The primary structure comprises 168 residues: Ribosome maturation factor RimM (168 aa).

The PRC barrel domain occupies 93-167 (ENEFYQSDLV…YITLNMPEFI (75 aa)).

Belongs to the RimM family. Binds ribosomal protein uS19.

Its subcellular location is the cytoplasm. Its function is as follows. An accessory protein needed during the final step in the assembly of 30S ribosomal subunit, possibly for assembly of the head region. Essential for efficient processing of 16S rRNA. May be needed both before and after RbfA during the maturation of 16S rRNA. It has affinity for free ribosomal 30S subunits but not for 70S ribosomes. This Wolbachia sp. subsp. Brugia malayi (strain TRS) protein is Ribosome maturation factor RimM.